We begin with the raw amino-acid sequence, 397 residues long: 1-deoxy-D-xylulose 5-phosphate reductoisomerase (397 aa).

NADPH is bound by residues serine 10, glycine 11, serine 12, isoleucine 13, alanine 36, arginine 37, and asparagine 124. Lysine 125 serves as a coordination point for 1-deoxy-D-xylulose 5-phosphate. Residue glutamate 126 coordinates NADPH. Position 150 (aspartate 150) interacts with Mn(2+). The 1-deoxy-D-xylulose 5-phosphate site is built by serine 151, glutamate 152, serine 186, and histidine 209. Glutamate 152 provides a ligand contact to Mn(2+). Glycine 215 contacts NADPH. 1-deoxy-D-xylulose 5-phosphate contacts are provided by serine 222, asparagine 227, lysine 228, and glutamate 231. Glutamate 231 provides a ligand contact to Mn(2+).

This sequence belongs to the DXR family. The cofactor is Mg(2+). Mn(2+) is required as a cofactor.

It catalyses the reaction 2-C-methyl-D-erythritol 4-phosphate + NADP(+) = 1-deoxy-D-xylulose 5-phosphate + NADPH + H(+). Its pathway is isoprenoid biosynthesis; isopentenyl diphosphate biosynthesis via DXP pathway; isopentenyl diphosphate from 1-deoxy-D-xylulose 5-phosphate: step 1/6. Functionally, catalyzes the NADPH-dependent rearrangement and reduction of 1-deoxy-D-xylulose-5-phosphate (DXP) to 2-C-methyl-D-erythritol 4-phosphate (MEP). This is 1-deoxy-D-xylulose 5-phosphate reductoisomerase from Aeromonas salmonicida (strain A449).